A 382-amino-acid polypeptide reads, in one-letter code: Alcohol dehydrogenase 1 (382 aa).

Zn(2+) is bound by residues cysteine 49, threonine 51, histidine 71, cysteine 101, cysteine 104, cysteine 107, cysteine 115, and cysteine 179. An alcohol-binding residues include threonine 51 and histidine 71. An NAD(+)-binding site is contributed by threonine 51. Residues 204–209 (GLGAVG), aspartate 228, arginine 233, threonine 275, valine 298, 298–300 (VGV), phenylalanine 325, and arginine 375 each bind NAD(+).

It belongs to the zinc-containing alcohol dehydrogenase family. Homodimer. The cofactor is Zn(2+).

The protein localises to the cytoplasm. It catalyses the reaction a primary alcohol + NAD(+) = an aldehyde + NADH + H(+). It carries out the reaction a secondary alcohol + NAD(+) = a ketone + NADH + H(+). This protein is responsible for the conversion of alcohols to aldehydes in plants and is important for NAD metabolism during anaerobic respiration. This is Alcohol dehydrogenase 1 (ADH1) from Petunia hybrida (Petunia).